Consider the following 222-residue polypeptide: Adenylate kinase, chloroplastic (222 aa).

15–20 (ASGKGT) lines the ATP pocket. The interval 35-64 (SAGDLLRAEIAAGSENGKRAKEFMEKGQLV) is NMP. AMP is bound by residues Arg41, 62 to 64 (QLV), 91 to 94 (GYPR), and Gln98. The tract at residues 128–161 (GRRLDPVTGKIYHLKYSPPENEEIASRLTQRFDD) is LID. Arg129 is a binding site for ATP. Arg158 lines the AMP pocket. Ala195 is an ATP binding site.

Monomer.

It is found in the plastid. The protein localises to the chloroplast. The catalysed reaction is AMP + ATP = 2 ADP. In terms of biological role, catalyzes the reversible transfer of the terminal phosphate group between ATP and AMP. Plays an important role in cellular energy homeostasis and in adenine nucleotide metabolism. The maize enzyme also works with CMP, albeit with 10% of the activity with AMP. This is Adenylate kinase, chloroplastic (ADK1) from Zea mays (Maize).